Here is a 315-residue protein sequence, read N- to C-terminus: N-acetyl-D-glutamate racemase (315 aa).

Mg(2+) contacts are provided by D147, E173, and D196.

This sequence belongs to the mandelate racemase/muconate lactonizing enzyme family. It depends on Mg(2+) as a cofactor.

It carries out the reaction N-acetyl-D-glutamate = N-acetyl-L-glutamate. It participates in amino-acid degradation. Racemase involved in a deamination-independent D-glutamate degradation pathway, named the DgcN-DgcA pathway. Catalyzes the conversion of N-acetyl-D-glutamate to N-acetyl-L-glutamate. Also shows racemase activity towards the dipeptide L-Ala-D-Glu, a key constituent of peptidoglycan muropeptides, suggesting that it may also contribute to the degradation of peptidoglycans. The protein is N-acetyl-D-glutamate racemase of Pseudoalteromonas sp.